The primary structure comprises 221 residues: Ribosomal RNA large subunit methyltransferase E (221 aa).

Residues glycine 60, tryptophan 62, aspartate 89, aspartate 105, and aspartate 134 each contribute to the S-adenosyl-L-methionine site. Lysine 174 serves as the catalytic Proton acceptor. The segment at 199-221 (KPKASRDKSSETFLLGRQLKHPG) is disordered.

It belongs to the class I-like SAM-binding methyltransferase superfamily. RNA methyltransferase RlmE family.

It is found in the cytoplasm. The enzyme catalyses uridine(2552) in 23S rRNA + S-adenosyl-L-methionine = 2'-O-methyluridine(2552) in 23S rRNA + S-adenosyl-L-homocysteine + H(+). Specifically methylates the uridine in position 2552 of 23S rRNA at the 2'-O position of the ribose in the fully assembled 50S ribosomal subunit. In Ralstonia pickettii (strain 12J), this protein is Ribosomal RNA large subunit methyltransferase E.